The sequence spans 169 residues: Regulator of sigma D (169 aa).

The protein belongs to the Rsd/AlgQ family. Interacts with RpoD.

Its subcellular location is the cytoplasm. Its function is as follows. Binds RpoD and negatively regulates RpoD-mediated transcription activation by preventing the interaction between the primary sigma factor RpoD with the catalytic core of the RNA polymerase and with promoter DNA. May be involved in replacement of the RNA polymerase sigma subunit from RpoD to RpoS during the transition from exponential growth to the stationary phase. The chain is Regulator of sigma D from Yersinia pestis.